The chain runs to 456 residues: Bifunctional protein GlmU (456 aa).

Positions 1 to 228 (MTLPLHVLIL…PQDVEGANDP (228 aa)) are pyrophosphorylase. UDP-N-acetyl-alpha-D-glucosamine is bound by residues 10-13 (LAAG), Lys24, Gln76, 81-82 (GT), 103-105 (YGD), Gly138, Glu153, Asn168, and Asn226. Asp105 is a binding site for Mg(2+). Asn226 provides a ligand contact to Mg(2+). Positions 229–249 (WQLAQLERAWQLRAARTLCLQ) are linker. The N-acetyltransferase stretch occupies residues 250 to 456 (GVRMADPARV…GWKRPTKKSP (207 aa)). UDP-N-acetyl-alpha-D-glucosamine is bound by residues Arg332 and Lys350. His362 (proton acceptor) is an active-site residue. UDP-N-acetyl-alpha-D-glucosamine is bound by residues Tyr365 and Asn376. Residues Ala379, 385–386 (NY), Ser404, Ala422, and Arg439 contribute to the acetyl-CoA site.

In the N-terminal section; belongs to the N-acetylglucosamine-1-phosphate uridyltransferase family. This sequence in the C-terminal section; belongs to the transferase hexapeptide repeat family. As to quaternary structure, homotrimer. Requires Mg(2+) as cofactor.

It is found in the cytoplasm. It catalyses the reaction alpha-D-glucosamine 1-phosphate + acetyl-CoA = N-acetyl-alpha-D-glucosamine 1-phosphate + CoA + H(+). The catalysed reaction is N-acetyl-alpha-D-glucosamine 1-phosphate + UTP + H(+) = UDP-N-acetyl-alpha-D-glucosamine + diphosphate. Its pathway is nucleotide-sugar biosynthesis; UDP-N-acetyl-alpha-D-glucosamine biosynthesis; N-acetyl-alpha-D-glucosamine 1-phosphate from alpha-D-glucosamine 6-phosphate (route II): step 2/2. It functions in the pathway nucleotide-sugar biosynthesis; UDP-N-acetyl-alpha-D-glucosamine biosynthesis; UDP-N-acetyl-alpha-D-glucosamine from N-acetyl-alpha-D-glucosamine 1-phosphate: step 1/1. The protein operates within bacterial outer membrane biogenesis; LPS lipid A biosynthesis. In terms of biological role, catalyzes the last two sequential reactions in the de novo biosynthetic pathway for UDP-N-acetylglucosamine (UDP-GlcNAc). The C-terminal domain catalyzes the transfer of acetyl group from acetyl coenzyme A to glucosamine-1-phosphate (GlcN-1-P) to produce N-acetylglucosamine-1-phosphate (GlcNAc-1-P), which is converted into UDP-GlcNAc by the transfer of uridine 5-monophosphate (from uridine 5-triphosphate), a reaction catalyzed by the N-terminal domain. The sequence is that of Bifunctional protein GlmU from Xanthomonas axonopodis pv. citri (strain 306).